A 435-amino-acid polypeptide reads, in one-letter code: Succinate--CoA ligase [ADP-forming] subunit beta, mitochondrial (435 aa).

The N-terminal 20 residues, 1-20, are a transit peptide targeting the mitochondrion; it reads MIGRISQPLLNTSQKFMAPA. Positions 32-259 constitute an ATP-grasp domain; that stretch reads MKILQNYEIK…SNAEFRQAKL (228 aa). ATP contacts are provided by residues Lys-69 and 76–78; that span reads GRG. Mg(2+)-binding residues include Asn-229 and Asp-243. Residues Asn-294 and 352-354 contribute to the substrate site; that span reads GIM.

This sequence belongs to the succinate/malate CoA ligase beta subunit family. ATP-specific subunit beta subfamily. As to quaternary structure, heterodimer of an alpha and a beta subunit. The beta subunit determines specificity for ATP. The cofactor is Mg(2+).

It is found in the mitochondrion. The enzyme catalyses succinate + ATP + CoA = succinyl-CoA + ADP + phosphate. It participates in carbohydrate metabolism; tricarboxylic acid cycle; succinate from succinyl-CoA (ligase route): step 1/1. Its function is as follows. ATP-specific succinyl-CoA synthetase functions in the citric acid cycle (TCA), coupling the hydrolysis of succinyl-CoA to the synthesis of ATP and thus represents the only step of substrate-level phosphorylation in the TCA. The beta subunit provides nucleotide specificity of the enzyme and binds the substrate succinate, while the binding sites for coenzyme A and phosphate are found in the alpha subunit. This is Succinate--CoA ligase [ADP-forming] subunit beta, mitochondrial from Caenorhabditis elegans.